Consider the following 602-residue polypeptide: MSIGSHSFSPGGPNGIIRSQSFAGFSGLQERRSRCNSFIENSSALKKPQAKVKKMHNLGHKNSTTPKEPQPKRMEEVYRALKNGLDEYLEVHQTELDKLTAQLKDMRRNSRLGVLYDLDKQIKAVERYMRRLEFHISKVDELYEAYCIQRRLCDGASKMKQAFAMSPASKAARESLTEINRSYKEYTENMCTIEAELENLLGEFCIKMKGLAGFARLCPGDQYEIFMRYGRQRWKLKGKIEVNGKQSWDGEEMVFLPLIVGLISIKVTEVKGLATHILVGSVTCETKDLFAARPQVVAVDINDLGTIKLNLEITWYPFDVEDLTPSTANVSKASALQRRMSMYSQGTPETPTFKDHSFFSNLPDDVFENGTAATEKRPLSFTFGDLPYEDRVPPANPAEPSSAHVSSSPDITTAATQHRALKSSESSSPDCSSSDSCGDAVPEPKDLPSPGEAVVTGNKVTPRARSEVCQKPSNAGSDRVFIEANVPVSLLQDTDEGSELKPVELDTYEGNITKQLVKRLTSAEVPGTPERLPCEGSISGESEGYKSYLDGSIEEALQGLLLALEPHKEQYKEFQDLDQEVMHLDDILKVSTFSESTTLKDI.

The interval Lys46–Arg73 is disordered. Residues Pro48–Gly59 show a composition bias toward basic residues. Positions Asn83–Leu112 form a coiled coil. Residues Arg173–Leu421 are necessary for interaction with NCAM and myoblast protrusion formation. Residues Gly384–Asn474 are disordered. Residues Ala403 to Thr416 show a composition bias toward polar residues. Over residues Ser423–Cys437 the composition is skewed to low complexity.

This sequence belongs to the RIPOR family. As to quaternary structure, homooligomer; homooligomerization is regulated by RHOC and leads to the formation of concatemers through the association of N- and C-termini. Interacts with NCAM.

The protein localises to the cytoplasm. The protein resides in the cytoskeleton. It localises to the cell projection. It is found in the filopodium. Its subcellular location is the apical cell membrane. The protein localises to the stereocilium. The protein resides in the stereocilium membrane. Functionally, acts as an inhibitor of the small GTPase RHOA and plays several roles in the regulation of myoblast and hair cell differentiation, lymphocyte T proliferation and neutrophil polarization. Plays a role in fetal mononuclear myoblast differentiation by promoting filopodia and myotube formation. Maintains naive T lymphocytes in a quiescent state and prevents chemokine-induced T lymphocyte responses, such as cell adhesion, polarization and migration. Involved also in the regulation of neutrophil polarization, chemotaxis and adhesion. Required for normal development of inner and outer hair cell stereocilia within the cochlea of the inner ear. Plays a role for maintaining the structural organization of the basal domain of stereocilia. Involved in mechanosensory hair cell function. Required for normal hearing. This chain is Rho family-interacting cell polarization regulator 2, found in Gallus gallus (Chicken).